A 118-amino-acid polypeptide reads, in one-letter code: Small ribosomal subunit protein uS13 (118 aa).

The segment at 94 to 118 is disordered; sequence SLPLRGQRTKTNARTRKGPRKPIRK.

This sequence belongs to the universal ribosomal protein uS13 family. As to quaternary structure, part of the 30S ribosomal subunit. Forms a loose heterodimer with protein S19. Forms two bridges to the 50S subunit in the 70S ribosome.

Located at the top of the head of the 30S subunit, it contacts several helices of the 16S rRNA. In the 70S ribosome it contacts the 23S rRNA (bridge B1a) and protein L5 of the 50S subunit (bridge B1b), connecting the 2 subunits; these bridges are implicated in subunit movement. Contacts the tRNAs in the A and P-sites. This chain is Small ribosomal subunit protein uS13, found in Shewanella sp. (strain W3-18-1).